The chain runs to 288 residues: Acetylglutamate kinase (288 aa).

Substrate is bound by residues 66-67 (GG), Arg88, and Asn182.

Belongs to the acetylglutamate kinase family. ArgB subfamily.

The protein localises to the cytoplasm. It catalyses the reaction N-acetyl-L-glutamate + ATP = N-acetyl-L-glutamyl 5-phosphate + ADP. The protein operates within amino-acid biosynthesis; L-arginine biosynthesis; N(2)-acetyl-L-ornithine from L-glutamate: step 2/4. Functionally, catalyzes the ATP-dependent phosphorylation of N-acetyl-L-glutamate. The sequence is that of Acetylglutamate kinase from Brachyspira hyodysenteriae (strain ATCC 49526 / WA1).